The chain runs to 511 residues: Glucose-1-phosphate adenylyltransferase large subunit 1, chloroplastic/amyloplastic (511 aa).

The N-terminal 58 residues, 1 to 58 (MAAMDLRVAAPASVAAAARCGTSLARPWPARAVGGGGGGGGRGRRLSVRTSVATTEAA), are a transit peptide targeting the chloroplast.

It belongs to the bacterial/plant glucose-1-phosphate adenylyltransferase family. Heterotetramer composed of two small and two large subunits. Expressed in leaves and stems.

The protein localises to the plastid. Its subcellular location is the chloroplast. It localises to the amyloplast. The catalysed reaction is alpha-D-glucose 1-phosphate + ATP + H(+) = ADP-alpha-D-glucose + diphosphate. Its pathway is glycan biosynthesis; starch biosynthesis. Its activity is regulated as follows. Activated by 3'phosphoglycerate, inhibited by orthophosphate. Allosteric regulation. Involved in synthesis of starch. Catalyzes the synthesis of ADP-glucose, a molecule that serves as an activated glycosyl donor for alpha-1,4-glucan synthesis. Essential for starch synthesis in leaf chloroplasts and endosperm amyloplasts. This chain is Glucose-1-phosphate adenylyltransferase large subunit 1, chloroplastic/amyloplastic, found in Oryza sativa subsp. japonica (Rice).